We begin with the raw amino-acid sequence, 459 residues long: Cysteine--tRNA ligase (459 aa).

Cys-28 contributes to the Zn(2+) binding site. The 'HIGH' region signature appears at 30 to 40 (ITVYDLCHVGH). Positions 209, 234, and 238 each coordinate Zn(2+). The short motif at 266–270 (KMSKS) is the 'KMSKS' region element. Lys-269 provides a ligand contact to ATP.

It belongs to the class-I aminoacyl-tRNA synthetase family. In terms of assembly, monomer. Requires Zn(2+) as cofactor.

Its subcellular location is the cytoplasm. The catalysed reaction is tRNA(Cys) + L-cysteine + ATP = L-cysteinyl-tRNA(Cys) + AMP + diphosphate. The chain is Cysteine--tRNA ligase (cysS) from Pasteurella multocida (strain Pm70).